We begin with the raw amino-acid sequence, 221 residues long: Glutathione S-transferase alpha-5 (221 aa).

Positions 3-83 constitute a GST N-terminal domain; the sequence is GKPVLHYFDG…YIATKYNLYG (81 aa). Lys-4 bears the N6-succinyllysine mark. Glutathione contacts are provided by residues Tyr-9, Arg-45, 54 to 55, and 67 to 68; these read QV and QT. The 123-residue stretch at 85-207 folds into the GST C-terminal domain; sequence DMKERALIDM…LQPGSQRKPF (123 aa).

The protein belongs to the GST superfamily. Alpha family. In terms of assembly, heterodimer of YC1 and YC2. In terms of tissue distribution, liver, nasal mucosa and epididymis.

The protein resides in the cytoplasm. It catalyses the reaction RX + glutathione = an S-substituted glutathione + a halide anion + H(+). In terms of biological role, conjugation of reduced glutathione to a wide number of exogenous and endogenous hydrophobic electrophiles. Has substantial activity toward aflatoxin B1-8,9-epoxide. The protein is Glutathione S-transferase alpha-5 (Gsta5) of Rattus norvegicus (Rat).